Reading from the N-terminus, the 111-residue chain is Nucleoid-associated protein Clim_0875 (111 aa).

This sequence belongs to the YbaB/EbfC family. Homodimer.

The protein resides in the cytoplasm. Its subcellular location is the nucleoid. Binds to DNA and alters its conformation. May be involved in regulation of gene expression, nucleoid organization and DNA protection. The chain is Nucleoid-associated protein Clim_0875 from Chlorobium limicola (strain DSM 245 / NBRC 103803 / 6330).